The chain runs to 280 residues: Homeobox protein SMOX-1 (280 aa).

The tract at residues 61–88 (PNNNSFQLNTTNDSNNNNTTNNGNDSRS) is disordered. The span at 69-85 (NTTNDSNNNNTTNNGND) shows a compositional bias: low complexity. Residues 214–219 (VYPWMN) carry the Antp-type hexapeptide motif. Residues 229–280 (QKRTRQTYTRYQTLELEKEFHFNKYLTRRRRIEIAHTLTLTERQIKIWFQNR) constitute a DNA-binding region (homeobox).

This sequence belongs to the Antp homeobox family.

It is found in the nucleus. This is Homeobox protein SMOX-1 (SMOX-1) from Schistosoma mansoni (Blood fluke).